The sequence spans 168 residues: GTP-dependent dephospho-CoA kinase (168 aa).

Residues Asp40, Val41, Val42, Asp59, and Glu112 each coordinate GTP.

The protein belongs to the GTP-dependent DPCK family.

It carries out the reaction 3'-dephospho-CoA + GTP = GDP + CoA + H(+). It functions in the pathway cofactor biosynthesis; coenzyme A biosynthesis. Its function is as follows. Catalyzes the GTP-dependent phosphorylation of the 3'-hydroxyl group of dephosphocoenzyme A to form coenzyme A (CoA). This chain is GTP-dependent dephospho-CoA kinase, found in Methanoregula boonei (strain DSM 21154 / JCM 14090 / 6A8).